Consider the following 104-residue polypeptide: Large ribosomal subunit protein uL24 (104 aa).

Belongs to the universal ribosomal protein uL24 family. Part of the 50S ribosomal subunit.

Functionally, one of two assembly initiator proteins, it binds directly to the 5'-end of the 23S rRNA, where it nucleates assembly of the 50S subunit. In terms of biological role, one of the proteins that surrounds the polypeptide exit tunnel on the outside of the subunit. This Pectobacterium atrosepticum (strain SCRI 1043 / ATCC BAA-672) (Erwinia carotovora subsp. atroseptica) protein is Large ribosomal subunit protein uL24.